Here is a 550-residue protein sequence, read N- to C-terminus: CCR4-NOT transcription complex subunit 6-like-A (550 aa).

The segment at 1–148 is required for interaction with cnot1, cnot3 and cnot7; it reads MPKEKYDPPD…LYQEPDGMRK (148 aa). LRR repeat units lie at residues 52 to 73, 75 to 96, 98 to 120, and 121 to 143; these read HLTVLHLSDNNLSRIPPDIAKL, NLVYLDLSSNKLRSLPAELGNV, SLRELLLNNNLLRVLPFELGRLF, and RLQTLGLKGNPLSQDILSLYQEP. Positions 153 to 550 are nuclease domain; it reads MLDNLSVHPE…INGVHLPSRR (398 aa). E235 is a binding site for Mg(2+). Residues E235, E271, H355, and P360 each coordinate substrate. Residue D405 participates in Mg(2+) binding. D405 (proton donor/acceptor) is an active-site residue. Substrate contacts are provided by N407, N474, and F479.

It belongs to the CCR4/nocturin family. In terms of assembly, component of the CCR4-NOT complex. Mg(2+) serves as cofactor.

It is found in the cytoplasm. The protein resides in the nucleus. It carries out the reaction Exonucleolytic cleavage of poly(A) to 5'-AMP.. Poly(A) nuclease with 3'-5' RNase activity. Catalytic component of the CCR4-NOT complex which is one of the major cellular mRNA deadenylases and is linked to various cellular processes including bulk mRNA degradation, miRNA-mediated repression, translational repression during translational initiation and general transcription regulation. Additional complex functions may be a consequence of its influence on mRNA expression. The chain is CCR4-NOT transcription complex subunit 6-like-A (cnot6l-a) from Xenopus laevis (African clawed frog).